Consider the following 258-residue polypeptide: Small ribosomal subunit protein uS3 (258 aa).

The 70-residue stretch at 16 to 85 (IDEYLEKELE…NPQVEVKEVD (70 aa)) folds into the KH type-2 domain. Residues 198 to 258 (RVTETPAEEA…KDADGEESEK (61 aa)) form a disordered region. Residues 203–245 (PAEEASEASEVVEDLEEVEDLEEIEDLEEVEDLEEVEDLEDTE) show a composition bias toward acidic residues.

The protein belongs to the universal ribosomal protein uS3 family. In terms of assembly, part of the 30S ribosomal subunit.

In terms of biological role, binds the lower part of the 30S subunit head. The chain is Small ribosomal subunit protein uS3 from Methanothermobacter thermautotrophicus (strain ATCC 29096 / DSM 1053 / JCM 10044 / NBRC 100330 / Delta H) (Methanobacterium thermoautotrophicum).